Consider the following 530-residue polypeptide: Bifunctional purine biosynthesis protein PurH (530 aa).

One can recognise an MGS-like domain in the interval 1-149 (MASDFLPVHR…KNFARVAVAT (149 aa)).

The protein belongs to the PurH family.

The catalysed reaction is (6R)-10-formyltetrahydrofolate + 5-amino-1-(5-phospho-beta-D-ribosyl)imidazole-4-carboxamide = 5-formamido-1-(5-phospho-D-ribosyl)imidazole-4-carboxamide + (6S)-5,6,7,8-tetrahydrofolate. It carries out the reaction IMP + H2O = 5-formamido-1-(5-phospho-D-ribosyl)imidazole-4-carboxamide. It functions in the pathway purine metabolism; IMP biosynthesis via de novo pathway; 5-formamido-1-(5-phospho-D-ribosyl)imidazole-4-carboxamide from 5-amino-1-(5-phospho-D-ribosyl)imidazole-4-carboxamide (10-formyl THF route): step 1/1. Its pathway is purine metabolism; IMP biosynthesis via de novo pathway; IMP from 5-formamido-1-(5-phospho-D-ribosyl)imidazole-4-carboxamide: step 1/1. The protein is Bifunctional purine biosynthesis protein PurH of Xylella fastidiosa (strain M12).